Reading from the N-terminus, the 293-residue chain is Ribosomal protein L11 methyltransferase (293 aa).

S-adenosyl-L-methionine contacts are provided by Thr145, Gly166, Asp188, and Asn230.

Belongs to the methyltransferase superfamily. PrmA family.

The protein localises to the cytoplasm. It carries out the reaction L-lysyl-[protein] + 3 S-adenosyl-L-methionine = N(6),N(6),N(6)-trimethyl-L-lysyl-[protein] + 3 S-adenosyl-L-homocysteine + 3 H(+). In terms of biological role, methylates ribosomal protein L11. The polypeptide is Ribosomal protein L11 methyltransferase (Escherichia coli O8 (strain IAI1)).